The primary structure comprises 309 residues: Aspartate carbamoyltransferase catalytic subunit (309 aa).

Residues R55 and T56 each coordinate carbamoyl phosphate. K85 contributes to the L-aspartate binding site. Residues R106, H135, and Q138 each contribute to the carbamoyl phosphate site. R168 and R230 together coordinate L-aspartate. Residues L268 and P269 each contribute to the carbamoyl phosphate site.

This sequence belongs to the aspartate/ornithine carbamoyltransferase superfamily. ATCase family. As to quaternary structure, heterododecamer (2C3:3R2) of six catalytic PyrB chains organized as two trimers (C3), and six regulatory PyrI chains organized as three dimers (R2).

It carries out the reaction carbamoyl phosphate + L-aspartate = N-carbamoyl-L-aspartate + phosphate + H(+). Its pathway is pyrimidine metabolism; UMP biosynthesis via de novo pathway; (S)-dihydroorotate from bicarbonate: step 2/3. Its function is as follows. Catalyzes the condensation of carbamoyl phosphate and aspartate to form carbamoyl aspartate and inorganic phosphate, the committed step in the de novo pyrimidine nucleotide biosynthesis pathway. The chain is Aspartate carbamoyltransferase catalytic subunit from Aliivibrio fischeri (strain MJ11) (Vibrio fischeri).